The chain runs to 270 residues: Formamidopyrimidine-DNA glycosylase (270 aa).

Residue P2 is the Schiff-base intermediate with DNA of the active site. E3 functions as the Proton donor in the catalytic mechanism. K58 serves as the catalytic Proton donor; for beta-elimination activity. H91, R109, and R151 together coordinate DNA. An FPG-type zinc finger spans residues 236–270; the sequence is QVYGKTGQQCPSCETPLKAVKLAARASVYCPECQS. The active-site Proton donor; for delta-elimination activity is the R260.

It belongs to the FPG family. In terms of assembly, monomer. The cofactor is Zn(2+).

It carries out the reaction Hydrolysis of DNA containing ring-opened 7-methylguanine residues, releasing 2,6-diamino-4-hydroxy-5-(N-methyl)formamidopyrimidine.. The enzyme catalyses 2'-deoxyribonucleotide-(2'-deoxyribose 5'-phosphate)-2'-deoxyribonucleotide-DNA = a 3'-end 2'-deoxyribonucleotide-(2,3-dehydro-2,3-deoxyribose 5'-phosphate)-DNA + a 5'-end 5'-phospho-2'-deoxyribonucleoside-DNA + H(+). Functionally, involved in base excision repair of DNA damaged by oxidation or by mutagenic agents. Acts as a DNA glycosylase that recognizes and removes damaged bases. Has a preference for oxidized purines, such as 7,8-dihydro-8-oxoguanine (8-oxoG). Has AP (apurinic/apyrimidinic) lyase activity and introduces nicks in the DNA strand. Cleaves the DNA backbone by beta-delta elimination to generate a single-strand break at the site of the removed base with both 3'- and 5'-phosphates. This Psychromonas ingrahamii (strain DSM 17664 / CCUG 51855 / 37) protein is Formamidopyrimidine-DNA glycosylase.